The primary structure comprises 356 residues: Guanine nucleotide-binding protein alpha-15 subunit (356 aa).

Gly2 carries N-myristoyl glycine lipidation. A lipid anchor (S-palmitoyl cysteine) is attached at Cys5. The region spanning 33–356 (GNQKLLLLGT…GRNLRGTGME (324 aa)) is the G-alpha domain. The tract at residues 36-49 (KLLLLGTGECGKST) is G1 motif. Residues 41 to 48 (GTGECGKS), 177 to 183 (LRIRIPT), 202 to 206 (DVGGQ), 271 to 274 (NKRD), and Ala328 each bind GTP. 2 residues coordinate Mg(2+): Ser48 and Thr183. Residues 175 to 183 (DMLRIRIPT) are G2 motif. Residues 198–207 (FRIFDVGGQR) form a G3 motif region. The interval 267-274 (ILFLNKRD) is G4 motif. The segment at 326–331 (TCATDT) is G5 motif.

The protein belongs to the G-alpha family. In terms of assembly, g proteins are composed of 3 units; alpha, beta and gamma. The alpha chain contains the guanine nucleotide binding site.

In terms of biological role, guanine nucleotide-binding proteins (G proteins) are involved as modulators or transducers in various transmembrane signaling systems. This chain is Guanine nucleotide-binding protein alpha-15 subunit (gpa-15), found in Caenorhabditis briggsae.